We begin with the raw amino-acid sequence, 454 residues long: Venom prothrombin activator porpharin-D (454 aa).

An N-terminal signal peptide occupies residues 1–20 (MAPQLLLCLILTFLWSLPEA). The propeptide occupies 21–40 (ESNVFLKSKEANRFLQRTKR). In terms of domain architecture, Gla spans 41–86 (SNSLFEEFRPGNIERECIEEKCSKEEAREIFKDNEKTEAFWNVYVD). Glutamate 46, glutamate 47, glutamate 54, glutamate 56, glutamate 59, glutamate 60, glutamate 65, glutamate 66, glutamate 69, and glutamate 75 each carry 4-carboxyglutamate. An intrachain disulfide couples cysteine 57 to cysteine 62. Positions 86–122 (DGDQCSSNPCHYGGTCKDGIGSYTCTCLPNYEGKNCE) constitute an EGF-like 1; calcium-binding domain. 11 disulfides stabilise this stretch: cysteine 90–cysteine 101, cysteine 95–cysteine 110, cysteine 112–cysteine 121, cysteine 129–cysteine 140, cysteine 136–cysteine 149, cysteine 151–cysteine 164, cysteine 172–cysteine 316, cysteine 216–cysteine 221, cysteine 236–cysteine 252, cysteine 364–cysteine 378, and cysteine 389–cysteine 417. Serine 92 carries O-linked (Hex...) serine glycosylation. The 36-residue stretch at 129–164 (CRFFNGNCWHFCKPVQNDTQCSCAESYRLGDDGHSC) folds into the EGF-like 2 domain. The propeptide at 182 to 209 (REASLPDFVQSQNATLLKKSDNPSPDIR) is activation peptide. A Peptidase S1 domain is found at 210–441 (IINGMDCKLG…FIPWIKAVMR (232 aa)). Active-site charge relay system residues include histidine 251 and aspartate 296. Serine 393 serves as the catalytic Charge relay system.

This sequence belongs to the peptidase S1 family. Snake venom subfamily. In terms of assembly, heterodimer of a light chain and a heavy chain; disulfide-linked. The vitamin K-dependent, enzymatic carboxylation of some glutamate residues allows the modified protein to bind calcium. Expressed by the venom gland.

The protein resides in the secreted. It catalyses the reaction Selective cleavage of Arg-|-Thr and then Arg-|-Ile bonds in prothrombin to form thrombin.. Snake prothrombin activator that attacks the hemostatic system of prey. This protein is functionally similar to blood coagulation factor Xa. This is Venom prothrombin activator porpharin-D from Pseudechis porphyriacus (Red-bellied black snake).